The chain runs to 102 residues: RNA-binding protein Hfq (102 aa).

The 60-residue stretch at 9-68 (DPFLNALRRERVPVSIYLVNGIKLQGQIESFDQFVILLKNTVSQMVYKHAISTVVPSRPV) folds into the Sm domain. A disordered region spans residues 63–102 (VPSRPVSHHSNNAGGGASNNYHHGSNAQGSTAQQDSEETE). A compositionally biased stretch (low complexity) spans 70 to 88 (HHSNNAGGGASNNYHHGSN).

This sequence belongs to the Hfq family. As to quaternary structure, homohexamer.

Its function is as follows. RNA chaperone that binds small regulatory RNA (sRNAs) and mRNAs to facilitate mRNA translational regulation in response to envelope stress, environmental stress and changes in metabolite concentrations. Also binds with high specificity to tRNAs. This chain is RNA-binding protein Hfq, found in Salmonella agona (strain SL483).